The chain runs to 208 residues: Uracil phosphoribosyltransferase (208 aa).

Residues Arg-78, Arg-103, and 130-138 (DPMLATGGS) contribute to the 5-phospho-alpha-D-ribose 1-diphosphate site. Residues Ile-193 and 198 to 200 (GDA) each bind uracil. Asp-199 is a binding site for 5-phospho-alpha-D-ribose 1-diphosphate.

This sequence belongs to the UPRTase family. Mg(2+) is required as a cofactor.

It catalyses the reaction UMP + diphosphate = 5-phospho-alpha-D-ribose 1-diphosphate + uracil. The protein operates within pyrimidine metabolism; UMP biosynthesis via salvage pathway; UMP from uracil: step 1/1. With respect to regulation, allosterically activated by GTP. Functionally, catalyzes the conversion of uracil and 5-phospho-alpha-D-ribose 1-diphosphate (PRPP) to UMP and diphosphate. The chain is Uracil phosphoribosyltransferase from Blochmanniella pennsylvanica (strain BPEN).